Consider the following 155-residue polypeptide: Medium/long-chain acyl-CoA thioesterase YigI (155 aa).

Belongs to the YigI thioesterase family.

The protein localises to the cytoplasm. The enzyme catalyses a fatty acyl-CoA + H2O = a fatty acid + CoA + H(+). The catalysed reaction is a medium-chain fatty acyl-CoA + H2O = a medium-chain fatty acid + CoA + H(+). It carries out the reaction a long-chain fatty acyl-CoA + H2O = a long-chain fatty acid + CoA + H(+). Its function is as follows. Displays thioesterase activity against medium- to long-chain acyl-CoA substrates. Is involved in the thioesterase-dependent beta-oxidation pathway of (9Z,11E)-octadecadienoate (conjugated linoleic acid or CLA), along with TesB and FadM. The polypeptide is Medium/long-chain acyl-CoA thioesterase YigI (yigI) (Shigella flexneri).